Here is a 440-residue protein sequence, read N- to C-terminus: GTPase Der (440 aa).

EngA-type G domains follow at residues 3–167 (PIIA…PYDR) and 176–351 (TRIA…EQYC). Residues 9–16 (GRPNVGKS), 56–60 (DTGGF), 119–122 (NKVD), 182–189 (GRPNVGKS), 229–233 (DTAGI), and 294–297 (NKWD) each bind GTP. Residues 352-436 (KRVTTGELNR…PLKLIFRGRD (85 aa)) form the KH-like domain.

The protein belongs to the TRAFAC class TrmE-Era-EngA-EngB-Septin-like GTPase superfamily. EngA (Der) GTPase family. In terms of assembly, associates with the 50S ribosomal subunit.

In terms of biological role, GTPase that plays an essential role in the late steps of ribosome biogenesis. The chain is GTPase Der from Citrifermentans bemidjiense (strain ATCC BAA-1014 / DSM 16622 / JCM 12645 / Bem) (Geobacter bemidjiensis).